The primary structure comprises 229 residues: MIQTTFPDRALMAELVAKMLWEIKAVHFNAAQPYKLSSGMASPVYIDCRKLLSYPRIRSTVMDFAASTLLRDAGFEQFDCIAGGETAGIPFAALLADRLGLPMIYVRKQPKGHGRNAQIEGNMPEGSRVLVIEDLTTAGGSMFKFIDAVRAAGGIVDHGIALFFYDIFGQQRFTDGKVRLHHIATWRNVLAVARAQQLFDDKTLAEVEAFLDAPLAWSGRNGGVSELSL.

5-phospho-alpha-D-ribose 1-diphosphate contacts are provided by residues Arg-107, Lys-108, Lys-111, His-113, and 133–141; that span reads EDLTTAGGS. An orotate-binding site is contributed by Thr-137.

Belongs to the purine/pyrimidine phosphoribosyltransferase family. PyrE subfamily. In terms of assembly, homodimer. Mg(2+) serves as cofactor.

It carries out the reaction orotidine 5'-phosphate + diphosphate = orotate + 5-phospho-alpha-D-ribose 1-diphosphate. It participates in pyrimidine metabolism; UMP biosynthesis via de novo pathway; UMP from orotate: step 1/2. Its function is as follows. Catalyzes the transfer of a ribosyl phosphate group from 5-phosphoribose 1-diphosphate to orotate, leading to the formation of orotidine monophosphate (OMP). The chain is Orotate phosphoribosyltransferase from Rhizobium etli (strain ATCC 51251 / DSM 11541 / JCM 21823 / NBRC 15573 / CFN 42).